The sequence spans 1204 residues: DNA-directed RNA polymerase subunit beta' (1204 aa).

Residues Cys60, Cys62, Cys75, and Cys78 each contribute to the Zn(2+) site. Residues Asp449, Asp451, and Asp453 each contribute to the Mg(2+) site. The Zn(2+) site is built by Cys819, Cys893, Cys900, and Cys903.

The protein belongs to the RNA polymerase beta' chain family. As to quaternary structure, the RNAP catalytic core consists of 2 alpha, 1 beta, 1 beta' and 1 omega subunit. When a sigma factor is associated with the core the holoenzyme is formed, which can initiate transcription. It depends on Mg(2+) as a cofactor. Zn(2+) is required as a cofactor.

The enzyme catalyses RNA(n) + a ribonucleoside 5'-triphosphate = RNA(n+1) + diphosphate. In terms of biological role, DNA-dependent RNA polymerase catalyzes the transcription of DNA into RNA using the four ribonucleoside triphosphates as substrates. In Bacillus cytotoxicus (strain DSM 22905 / CIP 110041 / 391-98 / NVH 391-98), this protein is DNA-directed RNA polymerase subunit beta'.